Here is a 156-residue protein sequence, read N- to C-terminus: Small ribosomal subunit protein uS7 (156 aa).

This sequence belongs to the universal ribosomal protein uS7 family. In terms of assembly, part of the 30S ribosomal subunit. Contacts proteins S9 and S11.

Its function is as follows. One of the primary rRNA binding proteins, it binds directly to 16S rRNA where it nucleates assembly of the head domain of the 30S subunit. Is located at the subunit interface close to the decoding center, probably blocks exit of the E-site tRNA. The chain is Small ribosomal subunit protein uS7 from Leuconostoc citreum (strain KM20).